The chain runs to 292 residues: ATP synthase gamma chain (292 aa).

It belongs to the ATPase gamma chain family. As to quaternary structure, F-type ATPases have 2 components, CF(1) - the catalytic core - and CF(0) - the membrane proton channel. CF(1) has five subunits: alpha(3), beta(3), gamma(1), delta(1), epsilon(1). CF(0) has three main subunits: a, b and c.

It is found in the cell inner membrane. Its function is as follows. Produces ATP from ADP in the presence of a proton gradient across the membrane. The gamma chain is believed to be important in regulating ATPase activity and the flow of protons through the CF(0) complex. In Magnetococcus marinus (strain ATCC BAA-1437 / JCM 17883 / MC-1), this protein is ATP synthase gamma chain.